The chain runs to 249 residues: NADH dehydrogenase [ubiquinone] flavoprotein 2, mitochondrial (249 aa).

The transit peptide at 1–32 directs the protein to the mitochondrion; sequence MFFSAALRARAAGLTAQWGRHVRNLHKTAMQN. Residue Lys61 is modified to N6-acetyllysine. [2Fe-2S] cluster is bound by residues Cys135, Cys140, Cys176, and Cys180. Tyr193 bears the Phosphotyrosine; by SRC mark. Residues 213–249 form a disordered region; that stretch reads IPKPGPRSGRFSCEPAGGLTSLTEPPKGPGFGVQAGL.

The protein belongs to the complex I 24 kDa subunit family. As to quaternary structure, core subunit of respiratory chain NADH dehydrogenase (Complex I) which is composed of 45 different subunits. This is a component of the flavoprotein-sulfur (FP) fragment of the enzyme. [2Fe-2S] cluster serves as cofactor.

It is found in the mitochondrion inner membrane. It carries out the reaction a ubiquinone + NADH + 5 H(+)(in) = a ubiquinol + NAD(+) + 4 H(+)(out). Its function is as follows. Core subunit of the mitochondrial membrane respiratory chain NADH dehydrogenase (Complex I) which catalyzes electron transfer from NADH through the respiratory chain, using ubiquinone as an electron acceptor. Parts of the peripheral arm of the enzyme, where the electrons from NADH are accepted by flavin mononucleotide (FMN) and then passed along a chain of iron-sulfur clusters by electron tunnelling to the final acceptor ubiquinone. Contains one iron-sulfur cluster. The protein is NADH dehydrogenase [ubiquinone] flavoprotein 2, mitochondrial of Gorilla gorilla gorilla (Western lowland gorilla).